The chain runs to 426 residues: Enolase (426 aa).

Gln165 is a (2R)-2-phosphoglycerate binding site. Glu209 acts as the Proton donor in catalysis. Residues Asp244, Glu287, and Asp313 each coordinate Mg(2+). 4 residues coordinate (2R)-2-phosphoglycerate: Lys338, Arg367, Ser368, and Lys389. The active-site Proton acceptor is the Lys338.

Belongs to the enolase family. The cofactor is Mg(2+).

It is found in the cytoplasm. The protein resides in the secreted. The protein localises to the cell surface. The enzyme catalyses (2R)-2-phosphoglycerate = phosphoenolpyruvate + H2O. Its pathway is carbohydrate degradation; glycolysis; pyruvate from D-glyceraldehyde 3-phosphate: step 4/5. Catalyzes the reversible conversion of 2-phosphoglycerate (2-PG) into phosphoenolpyruvate (PEP). It is essential for the degradation of carbohydrates via glycolysis. This chain is Enolase, found in Methanococcus maripaludis (strain C7 / ATCC BAA-1331).